Consider the following 136-residue polypeptide: Small ribosomal subunit protein uS8c (136 aa).

This sequence belongs to the universal ribosomal protein uS8 family. In terms of assembly, part of the 30S ribosomal subunit.

The protein resides in the plastid. It localises to the chloroplast. Functionally, one of the primary rRNA binding proteins, it binds directly to 16S rRNA central domain where it helps coordinate assembly of the platform of the 30S subunit. This Tetradesmus obliquus (Green alga) protein is Small ribosomal subunit protein uS8c (rps8).